The chain runs to 749 residues: MAGSSFTLPSTGSAPLDMMLIDDSDLLQLGLQQVFSKRYTETPQSRYKLTRRASPDVSSGEGNVHALAFIYVNAETLQMIKNARSLTEANGVKDLVAIDVPPFRNDFSRALLLQVINLLGNNRNADDDLSHFIAVALPNSARSKILTTAPFEGSLSENFRGFPITREGNVACEVLAYGNNLMPKACSDSFPTVDLLYDYGKFFESCAADGRIGYFPEGVTKPKVAIIGAGFSGLVAASELLHAGVDDVTVYEASDRLGGKLWSHGFKSAPNVIAEMGAMRFPRSESCLFFYLKKHGLDSVGLFPNPGSVDTALFYRGRQYIWKAGEEPPELFRRVHHGWRAFLQDGYLHDGVMLASPLAIVDALNLGHLQQAHGFWQSWLTYFERESFSSGIEKMFLGNHPPGGEQWNSLDDLDLFKALGIGSGGFGPVFESGFIEILRLVVNGYEDNVRLSYEGISELPHRIASQVINGRSIRERTIHVQVEQIDREEDKINIKIKGGKVEVYDRVLVTSGFANIEMRHLLTSSNAFFHADVSHAIGNSHMTGASKLFLLTNEKFWLQHHLPSCILTTGVAKAVYCLDYDPRDPSGKGLVLISYTWEDDSHKLLAVPDKRERFASLQRDIGRAFPDFAKHLTPADGNYDDNIVQHDWLTDPHAGGAFKLNRRGNDVYSERLFFQPFDVMHPADDKGLYLAGCSCSFTGGWVHGAIQTACNATCAIIYGSGHLQELIHWRHLKEGNPLAHAWKRYRYQA.

FMN is bound by residues serine 232, glutamate 252, lysine 260, and arginine 280. Arginine 280 contributes to the substrate binding site.

Belongs to the tryptophan 2-monooxygenase family. FMN serves as cofactor.

The catalysed reaction is L-tryptophan + O2 = indole-3-acetamide + CO2 + H2O. It participates in plant hormone metabolism; auxin biosynthesis. The protein is Tryptophan 2-monooxygenase (aux1) of Rhizobium rhizogenes (Agrobacterium rhizogenes).